Reading from the N-terminus, the 139-residue chain is MRVTQGCFSFLPDLSDEQIKLQVGYAMSKGWAVSVEWTDDPHPRNSYWELWGLPLFDVKDPAAVMYELAECRKVNPEGYIKINAFDASIGTESCVMSFIVQRPINEPGFYLERNEVQGRNIQYTISSYAVQARPSGDRY.

This sequence belongs to the RuBisCO small chain family. In terms of assembly, heterohexadecamer of 8 large and 8 small subunits.

It is found in the plastid. The protein localises to the chloroplast. Functionally, ruBisCO catalyzes two reactions: the carboxylation of D-ribulose 1,5-bisphosphate, the primary event in carbon dioxide fixation, as well as the oxidative fragmentation of the pentose substrate in the photorespiration process. Both reactions occur simultaneously and in competition at the same active site. Although the small subunit is not catalytic it is essential for maximal activity. The protein is Ribulose bisphosphate carboxylase small subunit of Pylaiella littoralis (Seaweed).